Reading from the N-terminus, the 379-residue chain is Queuine tRNA-ribosyltransferase (379 aa).

The Proton acceptor role is filled by Asp96. Substrate contacts are provided by residues 96–100 (DSGGF), Asp150, Gln196, and Gly223. Residues 254-260 (GIGTPDY) are RNA binding. Residue Asp273 is the Nucleophile of the active site. 4 residues coordinate Zn(2+): Cys311, Cys313, Cys316, and His342.

This sequence belongs to the queuine tRNA-ribosyltransferase family. In terms of assembly, homodimer. Within each dimer, one monomer is responsible for RNA recognition and catalysis, while the other monomer binds to the replacement base PreQ1. Zn(2+) serves as cofactor.

The catalysed reaction is 7-aminomethyl-7-carbaguanine + guanosine(34) in tRNA = 7-aminomethyl-7-carbaguanosine(34) in tRNA + guanine. It participates in tRNA modification; tRNA-queuosine biosynthesis. In terms of biological role, catalyzes the base-exchange of a guanine (G) residue with the queuine precursor 7-aminomethyl-7-deazaguanine (PreQ1) at position 34 (anticodon wobble position) in tRNAs with GU(N) anticodons (tRNA-Asp, -Asn, -His and -Tyr). Catalysis occurs through a double-displacement mechanism. The nucleophile active site attacks the C1' of nucleotide 34 to detach the guanine base from the RNA, forming a covalent enzyme-RNA intermediate. The proton acceptor active site deprotonates the incoming PreQ1, allowing a nucleophilic attack on the C1' of the ribose to form the product. After dissociation, two additional enzymatic reactions on the tRNA convert PreQ1 to queuine (Q), resulting in the hypermodified nucleoside queuosine (7-(((4,5-cis-dihydroxy-2-cyclopenten-1-yl)amino)methyl)-7-deazaguanosine). The protein is Queuine tRNA-ribosyltransferase of Treponema denticola (strain ATCC 35405 / DSM 14222 / CIP 103919 / JCM 8153 / KCTC 15104).